We begin with the raw amino-acid sequence, 409 residues long: Potassium channel subfamily K member 3 (409 aa).

The Cytoplasmic portion of the chain corresponds to 1 to 8 (MKRQNVRT). A helical transmembrane segment spans residues 9-29 (LALIVCTFTYLLVGAAVFDAL). The N-linked (GlcNAc...) asparagine glycan is linked to Asn-53. Residues 78–101 (WRFAGSFYFAITVITTIGYGHAAP) constitute an intramembrane region (pore-forming). A helical membrane pass occupies residues 108-128 (VFCMFYALLGIPLTLVMFQSL). Residues 129 to 158 (GERINTFVRYLLHRAKRGLGMRHAEVSMAN) are Cytoplasmic-facing. The chain crosses the membrane as a helical span at residues 159–179 (MVLIGFVSCISTLCIGAAAFS). Positions 184-207 (WTFFQAYYYCFITLTTIGFGDYVA) form an intramembrane region, pore-forming. A helical membrane pass occupies residues 223–243 (FSFVYILTGLTVIGAFLNLVV). Topologically, residues 244-409 (LRFMTMNAED…RGLMKRRSSV (166 aa)) are cytoplasmic.

This sequence belongs to the two pore domain potassium channel (TC 1.A.1.8) family. Homodimer. Heterodimer with KCNK1. Heterodimer with KCNK9. Very strong expression in heart, also detected in kidney, brain, skin, testis, lung, skeletal muscle, small intestine and stomach. Not detected in liver, thymus or spleen. Expressed in adrenal glands mainly in zona glomerulosa and zona fasciculata of the cortex. Expressed at higher levels in brown and beige than in white adipocytes.

It localises to the cell membrane. The enzyme catalyses K(+)(in) = K(+)(out). It carries out the reaction Na(+)(in) = Na(+)(out). With respect to regulation, activated by halothane and isoflurane. Inhibited by external acidification, diacylglycerol and anandamide. Inactivated by barium. K(+) channel that conducts voltage-dependent outward rectifying currents upon membrane depolarization. Voltage sensing is coupled to K(+) electrochemical gradient in an 'ion flux gating' mode where outward but not inward ion flow opens the gate. Changes ion selectivity and becomes permeable to Na(+) ions in response to extracellular acidification. Protonation of the pH sensor His-98 stabilizes C-type inactivation conformation likely converting the channel from outward K(+)-conducting, to inward Na(+)-conducting to nonconductive state. Homo- and heterodimerizes to form functional channels with distinct regulatory and gating properties. Allows K(+) currents with fast-gating kinetics important for the repolarization and hyperpolarization phases of action potentials. In cerebellar granule cells, heteromeric KCNK3:KCNK9 channel may hyperpolarize the resting membrane potential to limit intrinsic neuronal excitability, but once the action potential threshold is reached, it may support high-frequency action potential firing and increased neuronal excitability. Dispensable for central chemosensory respiration i.e. breathing controlled by brainstem CO2/pH, it rather conducts pH-sensitive currents and controls the firing rate of serotonergic raphe neurons involved in potentiation of the respiratory chemoreflex. Additionally, imparts chemosensitivity to type 1 cells in carotid bodies which respond to a decrease in arterial oxygen pressure or an increase in carbon dioxide pressure or pH to initiate adaptive changes in pulmonary ventilation. In adrenal gland, contributes to the maintenance of a hyperpolarized resting membrane potential of aldosterone-producing cells at zona glomerulosa and limits aldosterone release as part of a regulatory mechanism that controls arterial blood pressure and electrolyte homeostasis. In brown adipocytes, mediates K(+) efflux that counteracts norepinephrine-induced membrane depolarization, limits Ca(2+) efflux and downstream cAMP and PKA signaling, ultimately attenuating lipid oxidation and adaptive thermogenesis. In Mus musculus (Mouse), this protein is Potassium channel subfamily K member 3.